A 1108-amino-acid chain; its full sequence is Probable arabinosyltransferase A (1108 aa).

The next 13 membrane-spanning stretches (helical) occupy residues 12–34 (IPRS…VPLL), 204–223 (IVMV…LAVL), 258–280 (VGLA…HVVG), 334–356 (VWMR…HWVL), 368–387 (ANRV…WLPF), 397–414 (IALG…AIAL), 421–443 (AVAV…AVAA), 463–482 (GLLA…LVVV), 531–553 (FAVL…RGHV), 582–604 (WAVQ…AFAC), 616–638 (TLYV…GWFY), 653–675 (IASH…LAAW), and 696–718 (VLAS…ASLT). Residues 804–825 (PGLVNSDASPNKPNVAYSDSAG) form a disordered region.

This sequence belongs to the emb family.

It localises to the cell membrane. Functionally, arabinosyl transferase responsible for the polymerization of arabinose into the arabinan of arabinogalactan. The polypeptide is Probable arabinosyltransferase A (embA) (Mycobacterium avium).